A 513-amino-acid polypeptide reads, in one-letter code: MEMAKEQELILVLDFGSQYNQLITRRIREMGVYSELHDHEISIEEIKKMNPKGIILSGGPNSVYEEGSFTIDPEIYNLGIPVLGICYGMQLTTKLLGGKVERANEREYGKAIINAKSDELFAGLPAEQTVWMSHSDKVIEIPEGFEVIADSPSTDYAAIEDKKRRIYGVQFHPEVRHTEYGNDLLNNFVRRVCDCKGQWTMENFIEIEIEKIRQRVGDRRVLCAMSGGVDSSVVAVLLHKAIGDQLTCIFVDHGLLRKGEGDMVMEQFGEGFNMNIIRVNAKDRFMNKLKGVSDPEQKRKIIGNEFVYVFDDEASKLKGVDFLAQGTLYTDVIESGTKTAQTIKSHHNVGGLPEDMEFELIEPINTLFKDEVRKLGIELGIPEHLVWRQPFPGPGLGIRVLGEITEDKLEIVRESDAILRQVIREEGLEREIWQYFTVLPNIQSVGVMGDYRTYDHTVGIRAVTSIDGMTSDFARIDWEVLQKISSRIVNEVDHVNRVVYDITSKPPSTIEWE.

In terms of domain architecture, Glutamine amidotransferase type-1 spans 9-198; sequence LILVLDFGSQ…VRRVCDCKGQ (190 aa). The active-site Nucleophile is the cysteine 86. Residues histidine 172 and glutamate 174 contribute to the active site. The region spanning 199–388 is the GMPS ATP-PPase domain; sequence WTMENFIEIE…LGIPEHLVWR (190 aa). Residue 226 to 232 participates in ATP binding; that stretch reads SGGVDSS.

Homodimer.

It catalyses the reaction XMP + L-glutamine + ATP + H2O = GMP + L-glutamate + AMP + diphosphate + 2 H(+). It participates in purine metabolism; GMP biosynthesis; GMP from XMP (L-Gln route): step 1/1. Catalyzes the synthesis of GMP from XMP. The polypeptide is GMP synthase [glutamine-hydrolyzing] (Staphylococcus aureus (strain Mu3 / ATCC 700698)).